An 84-amino-acid polypeptide reads, in one-letter code: Conotoxin Tx8.1 (84 aa).

The first 19 residues, 1–19 (LKMGAMFVLLLLFTLASSH), serve as a signal peptide directing secretion. Positions 20–44 (REGDIQARKTHLKSDFYRTLPRFAR) are excised as a propeptide.

The protein belongs to the conotoxin S superfamily. Contains 5 disulfide bonds. In terms of tissue distribution, expressed by the venom duct.

The protein resides in the secreted. The chain is Conotoxin Tx8.1 from Conus textile (Cloth-of-gold cone).